The following is a 225-amino-acid chain: MEQHTIITIDGPAGVGKSTLAKKLGTILNLPYLDTGAMFRKLALQLGNKAETLPDSILQEQCKKVTFQLQGVGKNSLLMCNGESIGHEIRSETAGILAAQLGERTIIREYLKNIEQQIGNTMSIIAEGRDLGTEVFPKAQFKFFIDANPIIRAQRRFNQLKKEGIFQDYNDILHSINYRDKLDKNRTIAPLEPAKDAILIDSSIMDIDSILKIMLNYITIPHLSQ.

11–19 (GPAGVGKST) provides a ligand contact to ATP.

Belongs to the cytidylate kinase family. Type 1 subfamily.

The protein resides in the cytoplasm. It carries out the reaction CMP + ATP = CDP + ADP. It catalyses the reaction dCMP + ATP = dCDP + ADP. This Lawsonia intracellularis (strain PHE/MN1-00) protein is Cytidylate kinase.